The following is a 202-amino-acid chain: Small ribosomal subunit protein uS4c (202 aa).

The S4 RNA-binding domain maps to 90-158 (MRSDNVIFRL…ISKNIELYQK (69 aa)).

Belongs to the universal ribosomal protein uS4 family. As to quaternary structure, part of the 30S ribosomal subunit. Contacts protein S5. The interaction surface between S4 and S5 is involved in control of translational fidelity.

The protein resides in the plastid. It localises to the chloroplast. Its function is as follows. One of the primary rRNA binding proteins, it binds directly to 16S rRNA where it nucleates assembly of the body of the 30S subunit. Functionally, with S5 and S12 plays an important role in translational accuracy. The chain is Small ribosomal subunit protein uS4c (rps4) from Anthoceros punctatus (Hornwort).